Consider the following 310-residue polypeptide: Aspartate carbamoyltransferase catalytic subunit (310 aa).

2 residues coordinate carbamoyl phosphate: Arg-59 and Thr-60. Lys-87 provides a ligand contact to L-aspartate. Carbamoyl phosphate-binding residues include Arg-109, His-139, and Gln-142. Positions 172 and 224 each coordinate L-aspartate. Carbamoyl phosphate is bound by residues Ala-265 and Pro-266.

The protein belongs to the aspartate/ornithine carbamoyltransferase superfamily. ATCase family. In terms of assembly, heterododecamer (2C3:3R2) of six catalytic PyrB chains organized as two trimers (C3), and six regulatory PyrI chains organized as three dimers (R2).

The catalysed reaction is carbamoyl phosphate + L-aspartate = N-carbamoyl-L-aspartate + phosphate + H(+). It functions in the pathway pyrimidine metabolism; UMP biosynthesis via de novo pathway; (S)-dihydroorotate from bicarbonate: step 2/3. Catalyzes the condensation of carbamoyl phosphate and aspartate to form carbamoyl aspartate and inorganic phosphate, the committed step in the de novo pyrimidine nucleotide biosynthesis pathway. This is Aspartate carbamoyltransferase catalytic subunit from Lactococcus lactis subsp. cremoris (strain MG1363).